Here is a 608-residue protein sequence, read N- to C-terminus: UvrABC system protein C (608 aa).

The region spanning 16–94 is the GIY-YIG domain; sequence NRPGVYRMFD…IKEWRPPYNI (79 aa). The UVR domain occupies 204–239; sequence NALADELNTGMEQAAMRLDFEKAAELRDQVAILRRV.

The protein belongs to the UvrC family. Interacts with UvrB in an incision complex.

Its subcellular location is the cytoplasm. The UvrABC repair system catalyzes the recognition and processing of DNA lesions. UvrC both incises the 5' and 3' sides of the lesion. The N-terminal half is responsible for the 3' incision and the C-terminal half is responsible for the 5' incision. This is UvrABC system protein C from Pseudomonas paraeruginosa (strain DSM 24068 / PA7) (Pseudomonas aeruginosa (strain PA7)).